A 433-amino-acid polypeptide reads, in one-letter code: Histone acetyltransferase type B subunit 2 (433 aa).

WD repeat units follow at residues 134–174 (NHDG…NTPS), 187–227 (GQHK…KPNN), 237–277 (GHTA…SAPK), 282–322 (AHTG…VKLH), and 326–366 (SHTD…QEQT). The segment at 368–372 (DDAED) is interaction with the histone H4 N-terminus. Residues 383–433 (GHTSRPTDLAWSPHMEWALTSAAEDNIVMVWRPSKAVIDTGNEELTPDDLE) form a WD 6 repeat.

This sequence belongs to the WD repeat RBAP46/RBAP48/MSI1 family. Component of the HAT-B complex composed of at least HAT1 and HAT2. The HAT-B complex binds to histone H4 tail.

The protein localises to the cytoplasm. It is found in the nucleus. Functionally, regulatory subunit of the histone acetylase B (HAT-B) complex. The complex acetylates 'Lys-12' of histone H4 which is required for telomeric silencing. This chain is Histone acetyltransferase type B subunit 2 (HAT2), found in Mycosarcoma maydis (Corn smut fungus).